An 87-amino-acid chain; its full sequence is Large ribosomal subunit protein bL31B (87 aa).

It belongs to the bacterial ribosomal protein bL31 family. Type B subfamily. In terms of assembly, part of the 50S ribosomal subunit.

The chain is Large ribosomal subunit protein bL31B from Shigella boydii serotype 4 (strain Sb227).